Here is a 393-residue protein sequence, read N- to C-terminus: Arginine--pyruvate transaminase AruH (393 aa).

Lysine 237 carries the N6-(pyridoxal phosphate)lysine modification.

Belongs to the class-I pyridoxal-phosphate-dependent aminotransferase family. In terms of assembly, homodimer. It depends on pyridoxal 5'-phosphate as a cofactor.

The catalysed reaction is L-arginine + pyruvate = 5-guanidino-2-oxopentanoate + L-alanine. The protein operates within amino-acid degradation; L-arginine degradation. In terms of biological role, catalyzes the conversion of L-arginine into 2-ketoarginine via transamination. L-arginine is the best substrate, but it can also use L-lysine, L-methionine, L-leucine, ornithine and L-glutamine, which indicates that it may have a broader physiological function in amino acid catabolism. This Pseudomonas aeruginosa (strain ATCC 15692 / DSM 22644 / CIP 104116 / JCM 14847 / LMG 12228 / 1C / PRS 101 / PAO1) protein is Arginine--pyruvate transaminase AruH (aruH).